The sequence spans 84 residues: Small ribosomal subunit protein bS18A (84 aa).

This sequence belongs to the bacterial ribosomal protein bS18 family. Part of the 30S ribosomal subunit. Forms a tight heterodimer with protein bS6.

Its function is as follows. Binds as a heterodimer with protein bS6 to the central domain of the 16S rRNA, where it helps stabilize the platform of the 30S subunit. The polypeptide is Small ribosomal subunit protein bS18A (rpsR1) (Mycobacterium bovis (strain ATCC BAA-935 / AF2122/97)).